The chain runs to 363 residues: Isopentenyl-diphosphate delta-isomerase (363 aa).

Residue 7-8 participates in substrate binding; it reads RK. FMN is bound by residues 71-73, S101, and N130; that span reads AMT. A substrate-binding site is contributed by Q160. Position 161 (E161) interacts with Mg(2+). FMN-binding positions include K192, S217, T222, 270–272, and 291–292; these read GIR and AG.

The protein belongs to the IPP isomerase type 2 family. As to quaternary structure, homooctamer. Dimer of tetramers. It depends on FMN as a cofactor. NADPH serves as cofactor. Requires Mg(2+) as cofactor.

It localises to the cytoplasm. It catalyses the reaction isopentenyl diphosphate = dimethylallyl diphosphate. Involved in the biosynthesis of isoprenoids. Catalyzes the 1,3-allylic rearrangement of the homoallylic substrate isopentenyl (IPP) to its allylic isomer, dimethylallyl diphosphate (DMAPP). The sequence is that of Isopentenyl-diphosphate delta-isomerase from Symbiobacterium thermophilum (strain DSM 24528 / JCM 14929 / IAM 14863 / T).